The chain runs to 137 residues: Bombinin-like peptides 2 (137 aa).

Positions 1–18 are cleaved as a signal peptide; sequence MNFKYIVAVSILIASAYA. Residue Asn-70 is modified to Asparagine amide. The tract at residues 92–112 is disordered; the sequence is DSLEHPEEASEKETRGFNQEE. Ile-136 is subject to Isoleucine amide.

It belongs to the bombinin family. Expressed by the skin glands.

The protein localises to the secreted. In terms of biological role, bombinin-like peptide 2 has antimicrobial activity, but no hemolytic activity. Preliminary evidence indicates that this peptide does not lyse and thus kill the bacteria by its antimicrobial activity. Its function is as follows. Bombinin H2 has antibacterial and hemolytic activity. This chain is Bombinin-like peptides 2, found in Bombina variegata (Yellow-bellied toad).